The primary structure comprises 281 residues: Energy-coupling factor transporter ATP-binding protein EcfA1 (281 aa).

The 236-residue stretch at 7–242 (ISVEDIVFRY…NKELVRIGLD (236 aa)) folds into the ABC transporter domain. 42-49 (GHNGSGKS) contacts ATP. Glutamate 168 functions as the Proton acceptor in the catalytic mechanism.

Belongs to the ABC transporter superfamily. Energy-coupling factor EcfA family. As to quaternary structure, forms a stable energy-coupling factor (ECF) transporter complex composed of 2 membrane-embedded substrate-binding proteins (S component), 2 ATP-binding proteins (A component) and 2 transmembrane proteins (T component).

The protein resides in the cell membrane. Its function is as follows. ATP-binding (A) component of a common energy-coupling factor (ECF) ABC-transporter complex. Unlike classic ABC transporters this ECF transporter provides the energy necessary to transport a number of different substrates. The polypeptide is Energy-coupling factor transporter ATP-binding protein EcfA1 (Bacillus subtilis (strain 168)).